The primary structure comprises 800 residues: Protein SPT2 homolog (800 aa).

Residues 1–687 (MDFHSVLRMA…PGHRPNMQPP (687 aa)) form an important for interaction with DNA region. Positions 53-82 (QEIQNKEVEAKRKKEGLLAKRKELKHDRKA) form a coiled coil. Disordered regions lie at residues 70 to 173 (LAKR…PALN), 197 to 646 (KEER…MAKP), and 661 to 698 (VPKS…TSSY). The segment covering 124–137 (TEEDEEYMTEEELY) has biased composition (acidic residues). Low complexity predominate over residues 155–164 (PQKVAKAAPG). Positions 196–224 (KKEERLRTAEELKELEFLERKAQKADRKD) form a coiled coil. Composition is skewed to basic and acidic residues over residues 197 to 226 (KEER…KDPM) and 249 to 259 (HSVEKRSHENS). Over residues 260–272 (KSSSTEQNGTFRK) the composition is skewed to polar residues. Over residues 273-295 (SSSDNRSREEKSGSVFHTKDSKF) the composition is skewed to basic and acidic residues. Composition is skewed to low complexity over residues 328–360 (SGST…SSGK), 367–377 (SSSARSSSGSG), 390–424 (GASG…SVGA), 443–501 (GVSG…SVSG), and 514–581 (GAPG…ASSS). Over residues 608-626 (NSVRHNTTSISVSARSSLG) the composition is skewed to polar residues. Over residues 684 to 693 (MQPPGRPLPP) the composition is skewed to pro residues. An important for interaction with histones region spans residues 688 to 800 (GRPLPPITSS…LKSAKKMKSR (113 aa)). Residues 756–800 (REQQKEEARSLRLGIQEDLEELRREEEELKQKAKQLKSAKKMKSR) adopt a coiled-coil conformation.

This sequence belongs to the SPT2 family. In terms of assembly, interacts with histones. Interacts with a heterotetrameric complex formed by histone H3 and H4, especially when the histone tetramer is not bound to DNA.

It is found in the nucleus. It localises to the nucleolus. Histone chaperone that stabilizes pre-existing histone tetramers and regulates replication-independent histone exchange on chromatin. Required for normal chromatin refolding in the coding region of transcribed genes, and for the suppression of spurious transcription. Binds DNA and histones and promotes nucleosome assembly (in vitro). Facilitates formation of tetrameric histone complexes containing histone H3 and H4. Modulates RNA polymerase 1-mediated transcription. Binds DNA, with a preference for branched DNA species, such as Y-form DNA and Holliday junction DNA. This Xenopus laevis (African clawed frog) protein is Protein SPT2 homolog (spty2d1).